The sequence spans 254 residues: Ribosomal RNA small subunit methyltransferase J (254 aa).

S-adenosyl-L-methionine contacts are provided by residues 101 to 102, 117 to 118, 153 to 154, and D171; these read RD, ER, and SS.

The protein belongs to the methyltransferase superfamily. RsmJ family.

The protein localises to the cytoplasm. The catalysed reaction is guanosine(1516) in 16S rRNA + S-adenosyl-L-methionine = N(2)-methylguanosine(1516) in 16S rRNA + S-adenosyl-L-homocysteine + H(+). Its function is as follows. Specifically methylates the guanosine in position 1516 of 16S rRNA. This is Ribosomal RNA small subunit methyltransferase J from Enterobacter sp. (strain 638).